Consider the following 1131-residue polypeptide: DNA polymerase II large subunit (1131 aa).

Belongs to the archaeal DNA polymerase II family. As to quaternary structure, heterodimer of a large subunit and a small subunit.

The catalysed reaction is DNA(n) + a 2'-deoxyribonucleoside 5'-triphosphate = DNA(n+1) + diphosphate. It carries out the reaction Exonucleolytic cleavage in the 3'- to 5'-direction to yield nucleoside 5'-phosphates.. Functionally, possesses two activities: a DNA synthesis (polymerase) and an exonucleolytic activity that degrades single-stranded DNA in the 3'- to 5'-direction. Has a template-primer preference which is characteristic of a replicative DNA polymerase. In Methanococcus maripaludis (strain C7 / ATCC BAA-1331), this protein is DNA polymerase II large subunit.